Consider the following 825-residue polypeptide: Translation initiation factor IF-2 (825 aa).

4 stretches are compositionally biased toward basic and acidic residues: residues Met-1–Lys-19, Arg-35–Arg-45, Leu-70–Lys-98, and Lys-113–Ala-122. Positions Met-1–Glu-239 are disordered. The segment covering Pro-158–Ser-169 has biased composition (low complexity). Over residues Gly-181 to Arg-191 the composition is skewed to basic residues. Residues Gln-194 to Arg-208 are compositionally biased toward polar residues. The segment covering Gln-211–Gln-220 has biased composition (basic residues). One can recognise a tr-type G domain in the interval Val-326 to Lys-495. Residues Gly-335–Thr-342 form a G1 region. Gly-335–Thr-342 contributes to the GTP binding site. The G2 stretch occupies residues Gly-360–Asn-364. The segment at Asp-381–Gly-384 is G3. Residues Asp-381–His-385 and Asn-435–Asp-438 contribute to the GTP site. The G4 stretch occupies residues Asn-435 to Asp-438. The G5 stretch occupies residues Ser-471–Lys-473.

Belongs to the TRAFAC class translation factor GTPase superfamily. Classic translation factor GTPase family. IF-2 subfamily.

Its subcellular location is the cytoplasm. Its function is as follows. One of the essential components for the initiation of protein synthesis. Protects formylmethionyl-tRNA from spontaneous hydrolysis and promotes its binding to the 30S ribosomal subunits. Also involved in the hydrolysis of GTP during the formation of the 70S ribosomal complex. In Lactobacillus delbrueckii subsp. bulgaricus (strain ATCC BAA-365 / Lb-18), this protein is Translation initiation factor IF-2.